We begin with the raw amino-acid sequence, 673 residues long: Gametogenetin (673 aa).

A disordered region spans residues 1–599 (MGNVQSEPSA…TSTAGASNKG (599 aa)). Positions 14 to 30 (SRKEQASDRASDSRRTP) are enriched in basic and acidic residues. Residues 70-83 (ASSSPLPLTLELPS) show a composition bias toward low complexity. Residues 125–506 (RGLLEASHRG…APTPPSTLSP (382 aa)) form an interaction with GGNBP1 region. Pro residues predominate over residues 161 to 178 (PAPPPTPLEPRKQLPPAP). Residues 192 to 202 (LASSATSPTES) are compositionally biased toward polar residues. The segment covering 257 to 268 (SASGPLAAKASP) has biased composition (low complexity). At S399 the chain carries Phosphoserine. A compositionally biased stretch (low complexity) spans 413–424 (PRRPTPALLAPP). A compositionally biased stretch (pro residues) spans 438–475 (RPVPPSPQQIPPLPPPPPTPPATPPPAPPPTPQPPALP). Over residues 504 to 531 (LSPTAAADQVPAATPATVTSQVPATATA) the composition is skewed to low complexity. Residues 511–673 (DQVPAATPAT…HYDLQATHST (163 aa)) are interactions with ZNF403/GGNBP2 and OAZ3. Residues 542–551 (TRTRRNKGPR) are compositionally biased toward basic residues.

Isoform 1 and isoform 3 interact with FANCL. Isoform 1 interacts with GGNBP1, ZNF403/GGNBP2 and OAZ3. Isoform 2 interacts with GGNBP1. Testis-specific. Specifically expressed in the germ cells and not in the somatic, Sertoli, or Leydig cells. In adult testis, expression starts in stage VIII pachytene spermatocytes, increases in stage IX and X pachytene spermatocytes, and culminates in stage XI diplotene spermatocytes and the meiotic cells in stage XII. Expression decreases slightly in step 1-3 spermatids, further decreases in step 4-11 spermatids, and is no longer detectable in step 12 spermatids and beyond. Isoform 2 is mainly expressed in testis.

It localises to the cytoplasm. Its subcellular location is the perinuclear region. It is found in the cytoplasmic vesicle. The protein resides in the nucleus. The protein localises to the nucleolus. May be involved in spermatogenesis. In Mus musculus (Mouse), this protein is Gametogenetin (Ggn).